Reading from the N-terminus, the 172-residue chain is Small ribosomal subunit protein uS5 (172 aa).

In terms of domain architecture, S5 DRBM spans 17-80; sequence LREKMISVNR…DEARRKMVKV (64 aa).

It belongs to the universal ribosomal protein uS5 family. In terms of assembly, part of the 30S ribosomal subunit. Contacts proteins S4 and S8.

Its function is as follows. With S4 and S12 plays an important role in translational accuracy. Functionally, located at the back of the 30S subunit body where it stabilizes the conformation of the head with respect to the body. This Cupriavidus metallidurans (strain ATCC 43123 / DSM 2839 / NBRC 102507 / CH34) (Ralstonia metallidurans) protein is Small ribosomal subunit protein uS5.